We begin with the raw amino-acid sequence, 64 residues long: Large ribosomal subunit protein bL35 (64 aa).

Belongs to the bacterial ribosomal protein bL35 family.

The protein is Large ribosomal subunit protein bL35 of Kineococcus radiotolerans (strain ATCC BAA-149 / DSM 14245 / SRS30216).